Consider the following 417-residue polypeptide: Guanine nucleotide-exchange factor SEC12 (417 aa).

Topologically, residues 1 to 388 (MGRRRGVELY…QLHLLPSRRS (388 aa)) are cytoplasmic. At Tyr-10 the chain carries 3'-nitrotyrosine. The segment at 101–135 (KGSKAEKSGSKEQGPRQRKGAPPAEKKSGAQVHPE) is disordered. Residues 103–115 (SKAEKSGSKEQGP) are compositionally biased toward basic and acidic residues. WD repeat units follow at residues 152–191 (SNEP…KVLE), 194–232 (AHEG…TQLQ), and 298–337 (CGHE…RLYY). A helical membrane pass occupies residues 389–409 (VPVWLLLLLCVGLIIVTILLL). Residues 410–417 (QTAFPGFL) are Lumenal-facing.

In terms of assembly, interacts with SAR1B (GDP-bound form). Interacts with MIA2; recruits PREB to endoplasmic reticulum exit sites. Interacts with CIDEB; facilitating loading of SCAP-SREBP into COPII vesicles.

It is found in the endoplasmic reticulum membrane. It localises to the nucleus. In terms of biological role, guanine nucleotide exchange factor (GEF) that regulates the assembly of the coat protein complex II/COPII in endoplasmic reticulum (ER) to Golgi vesicle-mediated transport. Selectively activates SAR1A and SAR1B by promoting the exchange of guanosine diphosphate (GDP) for guanosine triphosphate (GTP) in these small GTPases. In their activated GTP-bound state, SAR1A and SAR1B insert into the membrane of the endoplasmic reticulum where they recruit the remainder of the coat protein complex II/COPII which is responsible for both the sorting of proteins and the deformation and budding of membranes into vesicles destined to the Golgi. Was first identified based on its probable role in the regulation of pituitary gene transcription. Binds to the prolactin gene (PRL) promoter and seems to activate transcription. In Mus musculus (Mouse), this protein is Guanine nucleotide-exchange factor SEC12.